The sequence spans 372 residues: Queuine tRNA-ribosyltransferase (372 aa).

Asp-89 (proton acceptor) is an active-site residue. Substrate-binding positions include 89 to 93 (DSGGF), Asp-161, and Gly-232. Positions 262–268 (GIGDLPS) are RNA binding. The active-site Nucleophile is Asp-281. An RNA binding; important for wobble base 34 recognition region spans residues 286 to 290 (TKAAR). Zn(2+) is bound by residues Cys-319, Cys-321, Cys-324, and His-351.

Belongs to the queuine tRNA-ribosyltransferase family. Homodimer. Within each dimer, one monomer is responsible for RNA recognition and catalysis, while the other monomer binds to the replacement base PreQ1. It depends on Zn(2+) as a cofactor.

It catalyses the reaction 7-aminomethyl-7-carbaguanine + guanosine(34) in tRNA = 7-aminomethyl-7-carbaguanosine(34) in tRNA + guanine. Its pathway is tRNA modification; tRNA-queuosine biosynthesis. Functionally, catalyzes the base-exchange of a guanine (G) residue with the queuine precursor 7-aminomethyl-7-deazaguanine (PreQ1) at position 34 (anticodon wobble position) in tRNAs with GU(N) anticodons (tRNA-Asp, -Asn, -His and -Tyr). Catalysis occurs through a double-displacement mechanism. The nucleophile active site attacks the C1' of nucleotide 34 to detach the guanine base from the RNA, forming a covalent enzyme-RNA intermediate. The proton acceptor active site deprotonates the incoming PreQ1, allowing a nucleophilic attack on the C1' of the ribose to form the product. After dissociation, two additional enzymatic reactions on the tRNA convert PreQ1 to queuine (Q), resulting in the hypermodified nucleoside queuosine (7-(((4,5-cis-dihydroxy-2-cyclopenten-1-yl)amino)methyl)-7-deazaguanosine). The polypeptide is Queuine tRNA-ribosyltransferase (Chlamydia abortus (strain DSM 27085 / S26/3) (Chlamydophila abortus)).